We begin with the raw amino-acid sequence, 292 residues long: 4-hydroxy-tetrahydrodipicolinate synthase (292 aa).

Threonine 45 is a binding site for pyruvate. The Proton donor/acceptor role is filled by tyrosine 133. Lysine 161 functions as the Schiff-base intermediate with substrate in the catalytic mechanism. Isoleucine 203 is a pyruvate binding site.

Belongs to the DapA family. In terms of assembly, homodimer.

Its subcellular location is the cytoplasm. The enzyme catalyses L-aspartate 4-semialdehyde + pyruvate = (2S,4S)-4-hydroxy-2,3,4,5-tetrahydrodipicolinate + H2O + H(+). It participates in amino-acid biosynthesis; L-lysine biosynthesis via DAP pathway; (S)-tetrahydrodipicolinate from L-aspartate: step 3/4. Functionally, catalyzes the condensation of (S)-aspartate-beta-semialdehyde [(S)-ASA] and pyruvate to 4-hydroxy-tetrahydrodipicolinate (HTPA). The chain is 4-hydroxy-tetrahydrodipicolinate synthase from Ectopseudomonas mendocina (strain ymp) (Pseudomonas mendocina).